We begin with the raw amino-acid sequence, 561 residues long: MQGLVENIKSSLAKALQVAIAGAVDKGQVNKLEIPEVIIEVPREKGHGDFATNLAMQLAKPAKMAPRKIAEAIIENLDLANTQVERVEIAGPGFINFYLQPSWVHGVIPMIIQEDRNYGRLELGDGQRVQVEFVSANPTGLLHMGNARGAALGDSLASILDFAGYRVSREYYINDAGNQIENFGKSLEVRYLQQLGQDIQLPEEGYHGEDIIDTVKGYINKNGRGLLDADQTTRRKTLAAYALQEKLTHIRNTLLDFGVVYDVWYSEQALHDSGAIQETLDELRQKGFIYEQENALWFKATAFGDEKDEVVVRSNGIPTYFAADIAYHKDKYKRGFDRVIDIWGADHHGHVNRMKGSMEALGHNRDNLQIILMQLVRLLRGGEVVRMSKRTGQFVTLEELVEEVGRDAARYFFVMRSPDSHLEFDLDLAKSQTNDNPVFYIQYAHARICSILRQLQEQGRPLPEIAAINPTVLKEEAELELLRKLADFPSEIAAAAEMMAPHRIARYLHDLAGLFHSFYNSHRVITENEAISEARLVLVQCVRIVLRNALGLLGLTAPEKM.

Positions 136–146 (ANPTGLLHMGN) match the 'HIGH' region motif.

The protein belongs to the class-I aminoacyl-tRNA synthetase family. In terms of assembly, monomer.

It is found in the cytoplasm. It catalyses the reaction tRNA(Arg) + L-arginine + ATP = L-arginyl-tRNA(Arg) + AMP + diphosphate. The sequence is that of Arginine--tRNA ligase from Desulforamulus reducens (strain ATCC BAA-1160 / DSM 100696 / MI-1) (Desulfotomaculum reducens).